We begin with the raw amino-acid sequence, 208 residues long: Thymidylate kinase (208 aa).

ATP is bound at residue 10-17; it reads GGEGVGKS.

This sequence belongs to the thymidylate kinase family.

The enzyme catalyses dTMP + ATP = dTDP + ADP. Its function is as follows. Phosphorylation of dTMP to form dTDP in both de novo and salvage pathways of dTTP synthesis. The sequence is that of Thymidylate kinase from Rhizorhabdus wittichii (strain DSM 6014 / CCUG 31198 / JCM 15750 / NBRC 105917 / EY 4224 / RW1) (Sphingomonas wittichii).